A 300-amino-acid chain; its full sequence is Bifunctional protein FolD 2 (300 aa).

Residues 165–167 (GRS), serine 190, and isoleucine 231 each bind NADP(+).

Belongs to the tetrahydrofolate dehydrogenase/cyclohydrolase family. Homodimer.

It catalyses the reaction (6R)-5,10-methylene-5,6,7,8-tetrahydrofolate + NADP(+) = (6R)-5,10-methenyltetrahydrofolate + NADPH. The enzyme catalyses (6R)-5,10-methenyltetrahydrofolate + H2O = (6R)-10-formyltetrahydrofolate + H(+). It participates in one-carbon metabolism; tetrahydrofolate interconversion. Its function is as follows. Catalyzes the oxidation of 5,10-methylenetetrahydrofolate to 5,10-methenyltetrahydrofolate and then the hydrolysis of 5,10-methenyltetrahydrofolate to 10-formyltetrahydrofolate. The polypeptide is Bifunctional protein FolD 2 (Pseudomonas syringae pv. tomato (strain ATCC BAA-871 / DC3000)).